A 1724-amino-acid chain; its full sequence is MVMGIFANCIFCLKVKYLPQQQKKKLQTDIKENGGKFSFSLNPQCTHIILDNADVLSQYQLNSIQKNHVHIANPDFIWKSIREKRLLDVKNYDPYKPLDITPPPDQKASSSEVKTEGLCPDSATEEEDTVELTEFGMQNVEIPHLPQDFEVAKYNTLEKVGMEGGQEAVVVELQCSRDSRDCPFLISSHFLLDDGMETRRQFAIKKTSEDASEYFENYIEELKKQGFLLREHFTPEATQLASEQLQALLLEEVMNSSTLSQEVSDLVEMIWAEALGHLEHMLLKPVNRISLNDVSKAEGILLLVKAALKNGETAEQLQKMMTEFYRLIPHKGTMPKEVNLGLLAKKADLCQLIRDMVNVCETNLSKPNPPSLAKYRALRCKIEHVEQNTEEFLRVRKEVLQNHHSKSPVDVLQIFRVGRVNETTEFLSKLGNVRPLLHGSPVQNIVGILCRGLLLPKVVEDRGVQRTDVGNLGSGIYFSDSLSTSIKYSHPGETDGTRLLLICDVALGKCMDLHEKDFSLTEAPPGYDSVHGVSQTASVTTDFEDDEFVVYKTNQVKMKYIIKFSMPGDQIKDFHPSDHTELEEYRPEFSNFSKVEDYQLPDAKTSSSTKAGLQDASGNLVPLEDVHIKGRIIDTVAQVIVFQTYTNKSHVPIEAKYIFPLDDKAAVCGFEAFINGKHIVGEIKEKEEAQQEYLEAVTQGHGAYLMSQDAPDVFTVSVGNLPPKAKVLIKITYITELSILGTVGVFFMPATVAPWQQDKALNENLQDTVEKICIKEIGTKQSFSLTMSIEMPYVIEFIFSDTHELKQKRTDCKAVISTMEGSSLDSSGFSLHIGLSAAYLPRMWVEKHPEKESEACMLVFQPDLDVDLPDLASESEVIICLDCSSSMEGVTFLQAKQIALHALSLVGEKQKVNIIQFGTGYKELFSYPKHITSNTMAAEFIMSATPTMGNTDFWKTLRYLSLLYPARGSRNILLVSDGHLQDESLTLQLVKRSRPHTRLFACGIGSTANRHVLRILSQCGAGVFEYFNAKSKHSWRKQIEDQMTRLCSPSCHSVSVKWQQLNPDVPEALQAPAQVPSLFLNDRLLVYGFIPHCTQATLCALIQEKEFRTMVSTTELQKTTGTMIHKLAARALIRDYEDGILHENETSHEMKKQTLKSLIIKLSKENSLITQFTSFVAVEKRDENESPFPDIPKVSELIAKEDVDFLPYMSWQGEPQEAVRNQSLLASSEWPELRLSKRKHRKIPFSKRKMELSQPEVSEDFEEDGLGVLPAFTSNLERGGVEKLLDLSWTESCKPTATEPLFKKVSPWETSTSSFFPILAPAVGSYLPPTARAHSPASLSFASYRQVASFGSAAPPRQFDASQFSQGPVPGTCADWIPQSASCPTGPPQNPPSSPYCGIVFSGSSLSSAQSAPLQHPGGFTTRPSAGTFPELDSPQLHFSLPTDPDPIRGFGSYHPSASSPFHFQPSAASLTANLRLPMASALPEALCSQSRTTPVDLCLLEESVGSLEGSRCPVFAFQSSDTESDELSEVLQDSCFLQIKCDTKDDSILCFLEVKEEDEIVCIQHWQDAVPWTELLSLQTEDGFWKLTPELGLILNLNTNGLHSFLKQKGIQSLGVKGRECLLDLIATMLVLQFIRTRLEKEGIVFKSLMKMDDASISRNIPWAFEAIKQASEWVRRTEGQYPSICPRLELGNDWDSATKQLLGLQPISTVSPLHRVLHYSQG.

Residues 1 to 94 (MVMGIFANCI…RLLDVKNYDP (94 aa)) enclose the BRCT domain. Positions 19-25 (PQQQKKK) match the Nuclear localization signal motif. A disordered region spans residues 97–123 (PLDITPPPDQKASSSEVKTEGLCPDSA). 2 positions are modified to phosphothreonine: threonine 101 and threonine 333. Residues 242–370 (SEQLQALLLE…ETNLSKPNPP (129 aa)) enclose the PARP alpha-helical domain. The PARP catalytic domain maps to 369–573 (PPSLAKYRAL…FSMPGDQIKD (205 aa)). Positions 607–735 (SSTKAGLQDA…KVLIKITYIT (129 aa)) constitute a VIT domain. The VWFA domain maps to 876 to 1046 (EVIICLDCSS…KQIEDQMTRL (171 aa)). A Phosphoserine modification is found at serine 1236. Residues 1237–1249 (KRKHRKIPFSKRK) carry the Nuclear localization signal motif. At serine 1335 the chain carries Phosphoserine. A disordered region spans residues 1408–1452 (SAQSAPLQHPGGFTTRPSAGTFPELDSPQLHFSLPTDPDPIRGFG). At arginine 1476 the chain carries Asymmetric dimethylarginine. Residue serine 1504 is modified to Phosphoserine. The interaction with the major vault protein stretch occupies residues 1562–1724 (VCIQHWQDAV…LHRVLHYSQG (163 aa)).

The protein belongs to the ARTD/PARP family. Component of the vault ribonucleoprotein particle, at least composed of MVP, PARP4 and one or more vault RNAs (vRNAs). Interacts with TEP1. In terms of tissue distribution, widely expressed; the highest levels are in the kidney; also detected in heart, placenta, lung, liver, skeletal muscle, spleen, leukocytes and pancreas.

It is found in the cytoplasm. The protein localises to the nucleus. Its subcellular location is the cytoskeleton. It localises to the spindle. It carries out the reaction L-aspartyl-[protein] + NAD(+) = 4-O-(ADP-D-ribosyl)-L-aspartyl-[protein] + nicotinamide. The catalysed reaction is L-glutamyl-[protein] + NAD(+) = 5-O-(ADP-D-ribosyl)-L-glutamyl-[protein] + nicotinamide. Mono-ADP-ribosyltransferase that mediates mono-ADP-ribosylation of target proteins. The protein is Protein mono-ADP-ribosyltransferase PARP4 of Homo sapiens (Human).